A 296-amino-acid polypeptide reads, in one-letter code: Protoheme IX farnesyltransferase 1 (296 aa).

8 consecutive transmembrane segments (helical) span residues 14–34 (IVLL…ALSA), 41–61 (LWDY…SSAL), 86–106 (IGEN…VVYA), 108–128 (FLLN…YVII), 141–161 (IVIG…AATG), 165–185 (LLGF…FWCL), 230–250 (AFGM…LMLV), and 274–294 (YLTI…PFPF).

The protein belongs to the UbiA prenyltransferase family. Protoheme IX farnesyltransferase subfamily.

It localises to the cell membrane. It carries out the reaction heme b + (2E,6E)-farnesyl diphosphate + H2O = Fe(II)-heme o + diphosphate. The protein operates within porphyrin-containing compound metabolism; heme O biosynthesis; heme O from protoheme: step 1/1. Its function is as follows. Converts heme B (protoheme IX) to heme O by substitution of the vinyl group on carbon 2 of heme B porphyrin ring with a hydroxyethyl farnesyl side group. This is Protoheme IX farnesyltransferase 1 from Cenarchaeum symbiosum (strain A).